Here is a 386-residue protein sequence, read N- to C-terminus: Sulfate adenylyltransferase (386 aa).

It belongs to the sulfate adenylyltransferase family.

It catalyses the reaction sulfate + ATP + H(+) = adenosine 5'-phosphosulfate + diphosphate. The protein operates within sulfur metabolism; hydrogen sulfide biosynthesis; sulfite from sulfate: step 1/3. This is Sulfate adenylyltransferase from Persephonella marina (strain DSM 14350 / EX-H1).